The chain runs to 313 residues: Biotin synthase (313 aa).

The Radical SAM core domain occupies 37–263 (YYGKKVKLNM…INPTKEIRIA (227 aa)). Positions 55, 59, and 62 each coordinate [4Fe-4S] cluster. The [2Fe-2S] cluster site is built by Cys98, Cys131, Cys191, and Arg261.

Belongs to the radical SAM superfamily. Biotin synthase family. As to quaternary structure, homodimer. Requires [4Fe-4S] cluster as cofactor. It depends on [2Fe-2S] cluster as a cofactor.

It carries out the reaction (4R,5S)-dethiobiotin + (sulfur carrier)-SH + 2 reduced [2Fe-2S]-[ferredoxin] + 2 S-adenosyl-L-methionine = (sulfur carrier)-H + biotin + 2 5'-deoxyadenosine + 2 L-methionine + 2 oxidized [2Fe-2S]-[ferredoxin]. It functions in the pathway cofactor biosynthesis; biotin biosynthesis; biotin from 7,8-diaminononanoate: step 2/2. Catalyzes the conversion of dethiobiotin (DTB) to biotin by the insertion of a sulfur atom into dethiobiotin via a radical-based mechanism. The polypeptide is Biotin synthase (Staphylococcus epidermidis (strain ATCC 12228 / FDA PCI 1200)).